Consider the following 292-residue polypeptide: Ventral anterior homeobox 2 (292 aa).

The segment covering 1–36 has biased composition (basic and acidic residues); that stretch reads MGDGGAERDRGPKRREEPGGRSGCRGEHRGAEDLRA. The tract at residues 1 to 74 is disordered; it reads MGDGGAERDR…DGQQALGETD (74 aa). Positions 38–55 are enriched in polar residues; the sequence is TGSTSPREIAGTSASSPA. The homeobox DNA-binding region spans 102–161; that stretch reads PKRTRTSFTAEQLYRLEMEFQRCQYVVGRERTELARQLNLSETQVKVWFQNRRTKQKKDQ. Residues 212–241 form a disordered region; sequence AGHRGTSLGDPRNSSQRLNPMPSASASSPL.

The protein belongs to the EMX homeobox family.

The protein localises to the nucleus. Functionally, transcription factor that may function in dorsoventral specification of the forebrain. Regulates the expression of Wnt signaling antagonists including the expression of a truncated TCF7L2 isoform that cannot bind CTNNB1 and acts therefore as a potent dominant-negative Wnt antagonist. Plays a crucial role in eye development and, in particular, in the specification of the ventral optic vesicle. May be a regulator of axial polarization in the retina. The protein is Ventral anterior homeobox 2 (Vax2) of Rattus norvegicus (Rat).